Consider the following 356-residue polypeptide: Riboflavin biosynthesis protein RibD (356 aa).

A deaminase region spans residues 1–148; sequence MIREIDKNYM…EDFFTYITQE (148 aa). The 123-residue stretch at 4-126 folds into the CMP/dCMP-type deaminase domain; sequence EIDKNYMKLA…KLRNAGIEVD (123 aa). Residue His53 coordinates Zn(2+). Glu55 acts as the Proton donor in catalysis. Zn(2+) is bound by residues Cys78 and Cys87. The tract at residues 149 to 356 is reductase; it reads RPYITLKWAQ…EDLVIFFKRY (208 aa). Ala157 is a binding site for NADP(+). Substrate is bound at residue Ser171. Trp173 serves as a coordination point for NADP(+). Arg187 contacts substrate. NADP(+) is bound by residues Thr199 and Asp203. Substrate-binding residues include Leu207, Arg210, and Glu290. 292–298 serves as a coordination point for NADP(+); it reads GPRTLTS.

The protein in the N-terminal section; belongs to the cytidine and deoxycytidylate deaminase family. This sequence in the C-terminal section; belongs to the HTP reductase family. Zn(2+) is required as a cofactor.

The enzyme catalyses 2,5-diamino-6-hydroxy-4-(5-phosphoribosylamino)-pyrimidine + H2O + H(+) = 5-amino-6-(5-phospho-D-ribosylamino)uracil + NH4(+). The catalysed reaction is 5-amino-6-(5-phospho-D-ribitylamino)uracil + NADP(+) = 5-amino-6-(5-phospho-D-ribosylamino)uracil + NADPH + H(+). Its pathway is cofactor biosynthesis; riboflavin biosynthesis; 5-amino-6-(D-ribitylamino)uracil from GTP: step 2/4. It participates in cofactor biosynthesis; riboflavin biosynthesis; 5-amino-6-(D-ribitylamino)uracil from GTP: step 3/4. In terms of biological role, converts 2,5-diamino-6-(ribosylamino)-4(3h)-pyrimidinone 5'-phosphate into 5-amino-6-(ribosylamino)-2,4(1h,3h)-pyrimidinedione 5'-phosphate. The protein is Riboflavin biosynthesis protein RibD (ribD) of Aquifex aeolicus (strain VF5).